The following is a 337-amino-acid chain: Protein RETICULATA-RELATED 3, chloroplastic (337 aa).

The N-terminal 59 residues, Met1–Cys59, are a transit peptide targeting the chloroplast. Positions Asn70–Gly89 are enriched in gly residues. Positions Asn70–Ser96 are disordered. 2 consecutive transmembrane segments (helical) span residues Phe151–Ala171 and Val216–Ile236.

It belongs to the RETICULATA family. As to expression, expressed in root meristem, root vasculature, distal region of young leaf primordia, leaf bundle sheath cells, hydathodes and pollen grains.

It is found in the plastid. Its subcellular location is the chloroplast membrane. Its function is as follows. May play a role in leaf development. Required for leaf mesophyll cell division in the early stages of leaf organogenesis. This chain is Protein RETICULATA-RELATED 3, chloroplastic, found in Arabidopsis thaliana (Mouse-ear cress).